The following is a 493-amino-acid chain: Ribonuclease Y (493 aa).

The chain crosses the membrane as a helical span at residues 19–39 (IFAILFLIIVILNLGLLVFLA). The KH domain maps to 172–241 (SASFTVIESD…LTIRNILIND (70 aa)). Positions 300–392 (VLSHCLETGF…TQIGDKLSAG (93 aa)) constitute an HD domain.

It belongs to the RNase Y family.

Its subcellular location is the cell membrane. Its function is as follows. Endoribonuclease that initiates mRNA decay. The chain is Ribonuclease Y from Mycoplasma pneumoniae (strain ATCC 29342 / M129 / Subtype 1) (Mycoplasmoides pneumoniae).